The sequence spans 369 residues: MLLLPLSVLLLLTQPWRSLGAEMKIYSQKTMANACTLVMCSPPEDGLPGRDGRDGREGPRGEKGDPGSPGPAGRAGMPGPAGPIGLKGDNGSAGEPGPKGDTGPPGPPGMPGPAGREGPSGKQGSMGPPGTPGPKGDTGPKGGVGAPGIQGSPGPAGLKGERGAPGEPGAPGRAGAPGPAGAIGPQGPSGARGPPGLKGDRGTPGERGAKGESGLAEVNALRQRVGILEGQLQRLQNAFSQYKKAMLFPNGRSVGEKIFKTEGSEKTFQDAQQICTQAGGQLPSPRSAAENEALTQLATAQNKAAFLSMSDTRKEGTFIYPTGEPLVYSNWAPQEPNNDGGSENCVEIFPNGKWNDKVCGEQRLVICEF.

Residues 1–20 form the signal peptide; the sequence is MLLLPLSVLLLLTQPWRSLG. 2 positions are modified to S-nitrosocysteine: Cys-35 and Cys-40. A disordered region spans residues 41 to 215; that stretch reads SPPEDGLPGR…ERGAKGESGL (175 aa). One can recognise a Collagen-like domain in the interval 46-216; it reads GLPGRDGRDG…RGAKGESGLA (171 aa). Over residues 47–65 the composition is skewed to basic and acidic residues; that stretch reads LPGRDGRDGREGPRGEKGD. Pro-78 is subject to 4-hydroxyproline. Lys-87 carries the 5-hydroxylysine modification. N-linked (GlcNAc...) asparagine glycosylation occurs at Asn-90. The residue at position 96 (Pro-96) is a 4-hydroxyproline. At Lys-99 the chain carries 5-hydroxylysine. The segment covering 139-148 has biased composition (gly residues); the sequence is GPKGGVGAPG. 4-hydroxyproline is present on residues Pro-165 and Pro-171. Over residues 165 to 191 the composition is skewed to low complexity; it reads PGEPGAPGRAGAPGPAGAIGPQGPSGA. Residues 198–210 show a composition bias toward basic and acidic residues; that stretch reads KGDRGTPGERGAK. Positions 217–248 form a coiled coil; it reads EVNALRQRVGILEGQLQRLQNAFSQYKKAMLF. In terms of domain architecture, C-type lectin spans 254–369; it reads VGEKIFKTEG…GEQRLVICEF (116 aa). 2 disulfide bridges follow: Cys-275–Cys-367 and Cys-345–Cys-359.

Belongs to the SFTPD family. Oligomeric complex of 4 set of homotrimers. Post-translationally, hydroxylation on proline residues within the sequence motif, GXPG, is most likely to be 4-hydroxy as this fits the requirement for 4-hydroxylation in vertebrates. S-nitrosylation at Cys-35 and Cys-40 alters the quaternary structure which results in a pro-inflammatory chemoattractive signaling activity with macrophages.

It is found in the secreted. Its subcellular location is the extracellular space. The protein resides in the extracellular matrix. The protein localises to the surface film. Functionally, contributes to the lung's defense against inhaled microorganisms, organic antigens and toxins. Interacts with compounds such as bacterial lipopolysaccharides, oligosaccharides and fatty acids and modulates leukocyte action in immune response. May participate in the extracellular reorganization or turnover of pulmonary surfactant. Binds strongly maltose residues and to a lesser extent other alpha-glucosyl moieties. In Bos taurus (Bovine), this protein is Pulmonary surfactant-associated protein D (SFTPD).